Reading from the N-terminus, the 348-residue chain is MSIPETQKGVIFYESHGKLEYKDIPVPKPKANELLINVKYSGVCHTDLHAWHGDWPLPVKLPLVGGHEGAGVVVGMGENVKGWKIGDYAGIKWLNGSCMACEYCELGNESNCPHADLSGYTHDGSFQQYATADAVQAAHIPQGTDLAQVAPILCAGITVYKALKSANLMAGHWVAISGAAGGLGSLAVQYAKAMGYRVLGIDGGEGKEELFRSIGGEVFIDFTKEKDIVGAVLKATDGGAHGVINVSVSEAAIEASTRYVRANGTTVLVGMPAGAKCCSDVFNQVVKSISIVGSYVGNRADTREALDFFARGLVKSPIKVVGLSTLPEIYEKMEKGQIVGRYVVDTSK.

N-acetylserine is present on Ser2. Residue Cys44 coordinates Zn(2+). NAD(+) is bound by residues His45, Thr46, and His49. Zn(2+)-binding residues include His67, Glu68, Cys98, Cys101, Cys104, Cys112, and Cys154. NAD(+) contacts are provided by Gly181, Gly182, Leu183, Asp202, and Lys207. Phosphoserine is present on Ser213. Phe222 serves as a coordination point for NAD(+). Thr223 is modified (phosphothreonine). Glycyl lysine isopeptide (Lys-Gly) (interchain with G-Cter in ubiquitin) cross-links involve residues Lys226 and Lys234. 2 residues coordinate NAD(+): Val269 and Met271. Ser279 carries the phosphoserine modification. Lys287 is covalently cross-linked (Glycyl lysine isopeptide (Lys-Gly) (interchain with G-Cter in ubiquitin)). Residues Ser294 and Val296 each contribute to the NAD(+) site. Ser316 is subject to Phosphoserine. Residue Lys319 forms a Glycyl lysine isopeptide (Lys-Gly) (interchain with G-Cter in ubiquitin) linkage. Arg341 provides a ligand contact to NAD(+).

It belongs to the zinc-containing alcohol dehydrogenase family. In terms of assembly, homotetramer. It depends on Zn(2+) as a cofactor.

It is found in the cytoplasm. The enzyme catalyses a primary alcohol + NAD(+) = an aldehyde + NADH + H(+). It carries out the reaction a secondary alcohol + NAD(+) = a ketone + NADH + H(+). It catalyses the reaction ethanol + NAD(+) = acetaldehyde + NADH + H(+). The catalysed reaction is allyl alcohol + NADP(+) = acrolein + NADPH + H(+). The enzyme catalyses 1-propanol + NAD(+) = propanal + NADH + H(+). It carries out the reaction butan-1-ol + NAD(+) = butanal + NADH + H(+). It catalyses the reaction hexan-1-ol + NAD(+) = hexanal + NADH + H(+). The catalysed reaction is (R)-lactaldehyde + NAD(+) = methylglyoxal + NADH + H(+). The enzyme catalyses octan-1-ol + NAD(+) = octanal + NADH + H(+). It carries out the reaction butan-2-ol + NAD(+) = butan-2-one + NADH + H(+). It catalyses the reaction propan-2-ol + NAD(+) = acetone + NADH + H(+). The catalysed reaction is isobutanol + NAD(+) = 2-methylpropanal + NADH + H(+). Its function is as follows. Preferentially fermentative isozyme that reduces acetaldehyde to ethanol during the fermentation of glucose. Major enzyme required for the conversion of acetaldehyde to ethanol. Plays a key role in the carbohydrate metabolism through the regeneration of NAD(+) from glycolytic NADH. In the reverse reaction, preferentially catalyzes the conversion of primary unbranched alcohols to their corresponding aldehydes. Also shows activity toward secondary alcohols. Most active with ethanol, and its activity decreases as the size of the alcohol is increased. In Saccharomyces cerevisiae (strain ATCC 204508 / S288c) (Baker's yeast), this protein is Alcohol dehydrogenase 1 (ADH1).